Here is a 1417-residue protein sequence, read N- to C-terminus: Cytoadherence-linked asexual protein 3.1 (1417 aa).

Positions 1–24 (MVSFFKTPIFILIIFLYLNEKVIC) are cleaved as a signal peptide. Intrachain disulfides connect Cys-333–Cys-361, Cys-407–Cys-413, Cys-517–Cys-545, and Cys-521–Cys-542. The chain crosses the membrane as a helical span at residues 1204–1224 (LANGFMYAFCFFAISQMYAYF). Positions 1383-1417 (TYIDTEKMNEADSADSDDEKDSDTPDDELMISRFH) are disordered. Over residues 1394–1411 (DSADSDDEKDSDTPDDEL) the composition is skewed to acidic residues.

As to quaternary structure, self-associates. Component of the RhopH complex. RhopH complex is at least composed of CLAG3.1/CLAG3.2, RhopH2 and RhopH3 with a 1:1:1 subunit stoichiometry. CLAG3.1/CLAG3.2 mediates subunit association through independent contacts with RhopH2 and RhopH3, which do not directly interact with one another. Interacts with RhopH2. Interacts with RhopH3.

The protein resides in the host cell membrane. The protein localises to the host cytoplasm. Its subcellular location is the cytoplasmic vesicle. It is found in the secretory vesicle. It localises to the rhoptry. In terms of biological role, participates in the formation of new permeability pathways in Plasmodium-infected erythrocytes enabling the uptake of nutrients from the blood plasma. The chain is Cytoadherence-linked asexual protein 3.1 from Plasmodium falciparum.